Reading from the N-terminus, the 287-residue chain is Protoheme IX farnesyltransferase (287 aa).

7 consecutive transmembrane segments (helical) span residues leucine 19–threonine 39, methionine 100–valine 120, phenylalanine 134–valine 154, methionine 162–alanine 182, valine 212–glycine 232, valine 233–alanine 253, and valine 267–phenylalanine 287.

It belongs to the UbiA prenyltransferase family. Protoheme IX farnesyltransferase subfamily.

Its subcellular location is the cell inner membrane. It carries out the reaction heme b + (2E,6E)-farnesyl diphosphate + H2O = Fe(II)-heme o + diphosphate. Its pathway is porphyrin-containing compound metabolism; heme O biosynthesis; heme O from protoheme: step 1/1. Converts heme B (protoheme IX) to heme O by substitution of the vinyl group on carbon 2 of heme B porphyrin ring with a hydroxyethyl farnesyl side group. The polypeptide is Protoheme IX farnesyltransferase (Nitratidesulfovibrio vulgaris (strain DP4) (Desulfovibrio vulgaris)).